The sequence spans 640 residues: UvrABC system protein C (640 aa).

The region spanning 35–113 is the GIY-YIG domain; it reads DAPGVYRMIG…IKQLKPRFNV (79 aa). One can recognise a UVR domain in the interval 223-258; sequence RAVMATMAKAMEEAAEELEFERAARLRDRIRALSAV.

It belongs to the UvrC family. In terms of assembly, interacts with UvrB in an incision complex.

The protein resides in the cytoplasm. In terms of biological role, the UvrABC repair system catalyzes the recognition and processing of DNA lesions. UvrC both incises the 5' and 3' sides of the lesion. The N-terminal half is responsible for the 3' incision and the C-terminal half is responsible for the 5' incision. The protein is UvrABC system protein C of Caulobacter vibrioides (strain ATCC 19089 / CIP 103742 / CB 15) (Caulobacter crescentus).